Here is a 295-residue protein sequence, read N- to C-terminus: Epidermal growth factor-like protein 8 (295 aa).

The N-terminal stretch at 1-25 (MGSRAELHTLLGGLSFLLLLMSGQG) is a signal peptide. An EMI domain is found at 34–112 (SQGVCSRQTL…RHPGALTCDE (79 aa)). Cystine bridges form between C38–C97, C65–C71, C96–C110, C115–C125, C119–C131, C133–C142, C149–C160, C156–C169, and C171–C184. A glycan (N-linked (GlcNAc...) asparagine) is linked at N50. Positions 111–143 (DEAICAKPCQNGGVCVRPDQCECAPGWGGRHCH) constitute an EGF-like 1 domain. One can recognise an EGF-like 2; calcium-binding domain in the interval 145-185 (DVDECRTGVTLCSHRCHNTAGSFTCGCPHGLVLGPDGRTCA). A coiled-coil region spans residues 202 to 233 (VREAGREDRALRREIRELRGRLERLEQWAGQA).

The protein resides in the secreted. This Sus scrofa (Pig) protein is Epidermal growth factor-like protein 8 (EGFL8).